Here is a 154-residue protein sequence, read N- to C-terminus: Myoglobin (154 aa).

The Globin domain occupies Gly-2–Lys-148. Ser-4 carries the phosphoserine modification. A nitrite-binding site is contributed by His-65. His-65 is a binding site for O2. Residue Thr-68 is modified to Phosphothreonine. His-94 contributes to the heme b binding site.

It belongs to the globin family. As to quaternary structure, monomeric.

Its subcellular location is the cytoplasm. It localises to the sarcoplasm. The catalysed reaction is Fe(III)-heme b-[protein] + nitric oxide + H2O = Fe(II)-heme b-[protein] + nitrite + 2 H(+). The enzyme catalyses H2O2 + AH2 = A + 2 H2O. Its function is as follows. Monomeric heme protein which primary function is to store oxygen and facilitate its diffusion within muscle tissues. Reversibly binds oxygen through a pentacoordinated heme iron and enables its timely and efficient release as needed during periods of heightened demand. Depending on the oxidative conditions of tissues and cells, and in addition to its ability to bind oxygen, it also has a nitrite reductase activity whereby it regulates the production of bioactive nitric oxide. Under stress conditions, like hypoxia and anoxia, it also protects cells against reactive oxygen species thanks to its pseudoperoxidase activity. This chain is Myoglobin (MB), found in Vulpes chama (Cape fox).